The following is a 625-amino-acid chain: Chaperone protein HtpG (625 aa).

Residues 1–330 are a; substrate-binding; sequence MAKQVQNFNA…SSDLSLNVSR (330 aa). The segment at 331–545 is b; the sequence is ELLQQDRQVT…SADPSAHMQK (215 aa). The segment at 546 to 625 is c; it reads LMAQMGKEYA…MVQAADSTKH (80 aa).

The protein belongs to the heat shock protein 90 family. As to quaternary structure, homodimer.

The protein resides in the cytoplasm. In terms of biological role, molecular chaperone. Has ATPase activity. This is Chaperone protein HtpG from Bdellovibrio bacteriovorus (strain ATCC 15356 / DSM 50701 / NCIMB 9529 / HD100).